The primary structure comprises 448 residues: MSTAKDPGNGVYEILSLIFDFPSNEQRLWWHSTAPMFAAMLDNAGYSVHDQYRHLSIFKTHIIPFLGVYPTKGQERWLSILTRCGLPLELSLNCTDSVVRYAYEPINEMTGTEKDPSNTLPIIGSVQKLAQIQAGIDLEWFSYFKDELTLDESESAILQDTELVKEQIKTQNKLALDLKESQFALKVYFYPHLKSIATGNSTHFLIFDSVFKLSQKHDSIQPAFQALCDYVSRRNDSSEVDQHRALHARLLSCDLIDPAKSRVKIYLQEQTVSLPAMEDLWTLGGRRVDASTMDGLDMLRELWSLLKVPTGHLEYPKGYMELGEIPNEQLPSLVNYTLHRNDPMPEPQVYFTVFGMNDAEISNALTIFLQRHGFADMAKKYRVFLQDSYPYHDFESLNYLHSLVSFSYRRNKPYLSVYLHTFETGRWPVVADSPISFDAYRRCDLSTK.

Residues 80–81 (IL) and glutamate 89 contribute to the L-tryptophan site. Residues arginine 100, lysine 186, and tyrosine 188 each coordinate substrate. Residues tyrosine 190 and arginine 249 each coordinate L-tryptophan. Residues arginine 262, lysine 264, tyrosine 266, glutamine 348, tyrosine 350, tyrosine 414, and tyrosine 418 each contribute to the substrate site.

Belongs to the tryptophan dimethylallyltransferase family. In terms of assembly, homodimer.

The enzyme catalyses L-tryptophan + dimethylallyl diphosphate = 4-(3-methylbut-2-enyl)-L-tryptophan + diphosphate. Its pathway is alkaloid biosynthesis; ergot alkaloid biosynthesis. Its function is as follows. Catalyzes the first step of ergot alkaloid biosynthesis. Ergot alkaloids, which are produced by endophyte fungi, can enhance plant host fitness, but also cause livestock toxicosis to host plants. This chain is Tryptophan dimethylallyltransferase 2 (dmaW2), found in Claviceps purpurea (strain 20.1) (Ergot fungus).